A 476-amino-acid chain; its full sequence is E1B 55 kDa protein (476 aa).

Disordered regions lie at residues 1–20 (MERPNSSVAGLYSGLHGNGS) and 42–95 (FGSS…KMEN). A phosphoserine mark is found at S472 and S473.

This sequence belongs to the adenoviridae E1B 55 kDa protein family. As to quaternary structure, interacts with host PML-4 and PML-5; this interaction promotes efficient subnuclear targeting of E1B-55K to PML nuclear bodies. Interacts with E4-ORF3 protein. Interacts with E4-ORF6 protein.

The protein resides in the host nucleus. It localises to the host cytoplasm. Plays a major role to prevent cellular inhibition of viral genome replication. Assembles an SCF-like E3 ubiquitin ligase complex based on the cellular proteins ELOB, ELOC, CUL5 and RBX1, in cooperation with viral E4orf6. This viral RING-type ligase ubiquitinates cellular substrates and targets them to proteasomal degradation: TP53/p53, LIG4, MRE11-RAD50-NBS1 (MRN) complex, ITGA3, DAXX and BLM. E1B-55K probably acts as the substrate-specific adapter of the SCF-like E3 ubiquitin ligase complex. Degradation of host TP53/p53 activity is essential for preventing E1A-induced TP53 accumulation that would otherwise lead to cell apoptosis and growth arrest. E1B-55K also inactivates TP53 transcription-factor activity by binding its transactivation domain. E1B-55K also functions as a SUMO1 E3 ligase for TP53 which causes the latter to be sequestered in promyelocytic leukemia (PML) nuclear bodies thereby contributing to maximal inhibition of TP53 function. This is E1B 55 kDa protein from Human adenovirus F serotype 40 (HAdV-40).